A 451-amino-acid chain; its full sequence is Tryptophan--tRNA ligase (451 aa).

ATP-binding positions include 10 to 12 (TTT) and 18 to 19 (GN). The short motif at 11 to 19 (TTGTPHLGN) is the 'HIGH' region element. Asp-143 contacts L-tryptophan. Residues 155-157 (GRD), Leu-195, and 202-206 (KMSKS) contribute to the ATP site. The 'KMSKS' region motif lies at 202-206 (KMSKS).

It belongs to the class-I aminoacyl-tRNA synthetase family. In terms of assembly, homodimer.

It is found in the cytoplasm. The catalysed reaction is tRNA(Trp) + L-tryptophan + ATP = L-tryptophyl-tRNA(Trp) + AMP + diphosphate + H(+). Its function is as follows. Catalyzes the attachment of tryptophan to tRNA(Trp). In Bordetella pertussis (strain Tohama I / ATCC BAA-589 / NCTC 13251), this protein is Tryptophan--tRNA ligase.